A 536-amino-acid polypeptide reads, in one-letter code: Prolyl 3-hydroxylase sudestada1 (536 aa).

The interval 1–35 is disordered; that stretch reads METSSSSPVKPRRKDKDEDGRAEQEDSADQVGEPH. A compositionally biased stretch (basic and acidic residues) spans 14–24; it reads KDKDEDGRAEQ. The region spanning 165–275 is the Fe2OG dioxygenase domain; it reads KLDYVSASCS…RLTINGWFHG (111 aa). 2 residues coordinate Fe cation: H185 and D187. Y199 lines the 2-oxoglutarate pocket. Position 254 (H254) interacts with Fe cation. R266 contributes to the 2-oxoglutarate binding site. The tract at residues 467–486 is disordered; it reads PTAKAPTDGRRSDYDDEEED.

This sequence belongs to the TPA1 family. In terms of assembly, monomer. Fe(2+) is required as a cofactor. L-ascorbate serves as cofactor. As to expression, in third-instar larval tissues,highly expressed in the fat body, with significant expression in other organs including the brain, salivary glands, imaginal disks and gut.

The protein resides in the nucleus. The protein localises to the cytoplasm. The enzyme catalyses [ribosomal protein uS12]-L-proline + 2-oxoglutarate + O2 = [ribosomal protein uS12]-(3S)-3-hydroxy-L-proline + succinate + CO2. In terms of biological role, prolyl 3-hydroxylase that catalyzes 3-hydroxylation of 'Pro-62' of small ribosomal subunit uS12 (RpS23), thereby regulating protein translation termination efficiency. This Drosophila melanogaster (Fruit fly) protein is Prolyl 3-hydroxylase sudestada1 (sud1).